The primary structure comprises 517 residues: NEDD8-activating enzyme E1 regulatory subunit (517 aa).

This sequence belongs to the ubiquitin-activating E1 family. ULA1 subfamily. Heterodimer of uba3 and ula1. The complex binds NEDD8/ubl1 and ubc12.

It is found in the cytoplasm. It localises to the nucleus. Its pathway is protein modification; protein neddylation. In terms of biological role, regulatory subunit of the dimeric uba3-ula1 E1 enzyme. E1 activates NEDD8/ubl1 by first adenylating its C-terminal glycine residue with ATP, thereafter linking this residue to the side chain of the catalytic cysteine, yielding a NEDD8-UBA3 thioester and free AMP. E1 finally transfers NEDD8 to the catalytic cysteine of ubc12. This chain is NEDD8-activating enzyme E1 regulatory subunit (uba5), found in Schizosaccharomyces pombe (strain 972 / ATCC 24843) (Fission yeast).